Here is a 314-residue protein sequence, read N- to C-terminus: Acetaldehyde dehydrogenase 3 (314 aa).

Residue cysteine 132 is the Acyl-thioester intermediate of the active site. NAD(+) is bound by residues 163 to 171 (SAGPGTRAN) and asparagine 291.

It belongs to the acetaldehyde dehydrogenase family.

It carries out the reaction acetaldehyde + NAD(+) + CoA = acetyl-CoA + NADH + H(+). The sequence is that of Acetaldehyde dehydrogenase 3 from Dechloromonas aromatica (strain RCB).